The following is a 143-amino-acid chain: DPFSLDVWDPFKDFPFTNSALSASSFPQENSAFVSTRIDWKETPEAHVFKADLPGLKKEEVKVEIEDDRVLQISGERNVEKEDKNDQWHRVERSSGKFMRRFRLPENAKMDQVKAAMENGVLTVTVPKEEIKKPEVKSIEISS.

One can recognise a sHSP domain in the interval 29–143; that stretch reads ENSAFVSTRI…PEVKSIEISS (115 aa).

Belongs to the small heat shock protein (HSP20) family. In terms of assembly, forms oligomeric structures.

The protein resides in the cytoplasm. This Medicago sativa (Alfalfa) protein is 18.1 kDa class I heat shock protein (HSP18.1).